Reading from the N-terminus, the 255-residue chain is 3-oxo-5-alpha-steroid 4-dehydrogenase 1 (255 aa).

A run of 5 helical transmembrane segments spans residues 6–26, 82–102, 107–127, 142–162, and 205–225; these read LCLL…AFVG, VLLA…PVLI, PTLL…GYLQ, VTHP…VINI, and FALA…LCAL.

It belongs to the steroid 5-alpha reductase family.

The protein resides in the microsome membrane. It is found in the endoplasmic reticulum membrane. The enzyme catalyses a 3-oxo-5alpha-steroid + NADP(+) = a 3-oxo-Delta(4)-steroid + NADPH + H(+). It carries out the reaction 5alpha-pregnane-3,20-dione + NADP(+) = progesterone + NADPH + H(+). It catalyses the reaction 17beta-hydroxy-5alpha-androstan-3-one + NADP(+) = testosterone + NADPH + H(+). The catalysed reaction is androst-4-ene-3,17-dione + NADPH + H(+) = 5alpha-androstan-3,17-dione + NADP(+). Its function is as follows. Converts testosterone into 5-alpha-dihydrotestosterone and progesterone or corticosterone into their corresponding 5-alpha-3-oxosteroids. It plays a central role in sexual differentiation and androgen physiology. This chain is 3-oxo-5-alpha-steroid 4-dehydrogenase 1, found in Mus musculus (Mouse).